Consider the following 245-residue polypeptide: Derlin-1 (245 aa).

Residues 1 to 17 lie on the Cytoplasmic side of the membrane; sequence MDAGVWYRSLPRFTRYW. Residues 18-38 traverse the membrane as a helical segment; it reads LTATVVLSMLCRFDVIPLHWL. Topologically, residues 39-58 are lumenal; the sequence is HLDRSAVFSKLQLWRCMTSL. A helical membrane pass occupies residues 59-79; the sequence is FVFPISSNTAFHFLINCFFIV. Topologically, residues 80 to 99 are cytoplasmic; sequence QYSSKLEKDQYSRSPADYLY. Residues 100–120 traverse the membrane as a helical segment; the sequence is LLIVSAVLANIGGMIFNVYFL. The Lumenal segment spans residues 121–156; that stretch reads MDTLVLAITYIWCQLNKDVTVSFWFGTRFKAMYLPW. The chain crosses the membrane as a helical span at residues 157–177; that stretch reads VLAAFEFIFHFSLASLVGIFV. Residues 178–245 lie on the Cytoplasmic side of the membrane; that stretch reads GHVYYFFKFQ…WGRGMTLGRN (68 aa). Residues 218–245 are disordered; the sequence is FGLPPESRAPPRQATESPWGRGMTLGRN.

This sequence belongs to the derlin family.

The protein resides in the endoplasmic reticulum membrane. May be involved in the degradation process of specific misfolded endoplasmic reticulum (ER) luminal proteins. May also involved in endoplasmic reticulum stress-induced pre-emptive quality control, a mechanism that selectively attenuates the translocation of newly synthesized proteins into the endoplasmic reticulum and reroutes them to the cytosol for proteasomal degradation. The chain is Derlin-1 from Drosophila melanogaster (Fruit fly).